A 219-amino-acid chain; its full sequence is MPLQDTTLHIRHLGKQDYESVWHAMQHYTDTRNSESPDELWIVEHPPVFTQGQAGKSEHILNAGDIPVIQVDRGGQVTYHGPGQLVVYPLIDIKRSKIGVRQLVTHIEQSIINMLAKYDIQAYAKADAPGVYVNERKIASLGLRIRRGCSFHGLALNVDMDLAPFRRINPCGYAGLEMVQSKALGGPQTVTEAGEQLTITFSQLLGYQHLVHHQGLAAS.

In terms of domain architecture, BPL/LPL catalytic spans 34–209 (SESPDELWIV…TFSQLLGYQH (176 aa)). Residues 73–80 (RGGQVTYH), 140–142 (SLG), and 153–155 (GLA) contribute to the substrate site. Cys171 serves as the catalytic Acyl-thioester intermediate.

Belongs to the LipB family.

It is found in the cytoplasm. The catalysed reaction is octanoyl-[ACP] + L-lysyl-[protein] = N(6)-octanoyl-L-lysyl-[protein] + holo-[ACP] + H(+). It functions in the pathway protein modification; protein lipoylation via endogenous pathway; protein N(6)-(lipoyl)lysine from octanoyl-[acyl-carrier-protein]: step 1/2. Its function is as follows. Catalyzes the transfer of endogenously produced octanoic acid from octanoyl-acyl-carrier-protein onto the lipoyl domains of lipoate-dependent enzymes. Lipoyl-ACP can also act as a substrate although octanoyl-ACP is likely to be the physiological substrate. The chain is Octanoyltransferase from Shewanella putrefaciens (strain CN-32 / ATCC BAA-453).